The primary structure comprises 729 residues: Isocitrate dehydrogenase [NADP] (729 aa).

NADP(+) contacts are provided by N83 and S85. D-threo-isocitrate is bound by residues S121, N124, R128, R134, and K244. N124 is a binding site for NADP(+). D337 contributes to the Mg(2+) binding site. Positions 407 and 534 each coordinate D-threo-isocitrate. Residues D535 and D539 each coordinate Mg(2+). S572, H576, R587, D589, and R636 together coordinate NADP(+).

Belongs to the monomeric-type IDH family. In terms of assembly, monomer. Requires Mg(2+) as cofactor. Mn(2+) serves as cofactor.

It catalyses the reaction D-threo-isocitrate + NADP(+) = 2-oxoglutarate + CO2 + NADPH. Its function is as follows. Catalyzes the oxidative decarboxylation of isocitrate to 2-oxoglutarate and carbon dioxide with the concomitant reduction of NADP(+). The polypeptide is Isocitrate dehydrogenase [NADP] (Corynebacterium efficiens (strain DSM 44549 / YS-314 / AJ 12310 / JCM 11189 / NBRC 100395)).